A 67-amino-acid chain; its full sequence is Protein AaeX (67 aa).

The next 2 membrane-spanning stretches (helical) occupy residues 3 to 23 (LLPV…ELLI) and 39 to 59 (GIYE…CCLF).

This sequence belongs to the AaeX family.

The protein resides in the cell membrane. This chain is Protein AaeX, found in Yersinia pseudotuberculosis serotype O:1b (strain IP 31758).